Consider the following 69-residue polypeptide: Conotoxin Eb6.21 (69 aa).

A signal peptide spans 1 to 17; the sequence is VLIIAVLFLTACQLTTA. The propeptide occupies 18–41; the sequence is ETYSRGRQKHRARRSTDKNSKWTR. Cystine bridges form between Cys43–Cys57, Cys50–Cys61, and Cys56–Cys68.

The protein belongs to the conotoxin O1 superfamily. In terms of tissue distribution, expressed by the venom duct.

Its subcellular location is the secreted. This Conus ebraeus (Hebrew cone) protein is Conotoxin Eb6.21 (E1).